Here is a 238-residue protein sequence, read N- to C-terminus: ATP synthase subunit a (238 aa).

A run of 5 helical transmembrane segments spans residues 15–35 (IFNL…FVFI), 76–96 (YSLF…LGLM), 111–131 (PTAN…LTHI), 167–187 (LALR…LLLL), and 208–230 (AFSV…VYLG).

It belongs to the ATPase A chain family. As to quaternary structure, F-type ATPases have 2 components, CF(1) - the catalytic core - and CF(0) - the membrane proton channel. CF(1) has five subunits: alpha(3), beta(3), gamma(1), delta(1), epsilon(1). CF(0) has three main subunits: a(1), b(2) and c(9-12). The alpha and beta chains form an alternating ring which encloses part of the gamma chain. CF(1) is attached to CF(0) by a central stalk formed by the gamma and epsilon chains, while a peripheral stalk is formed by the delta and b chains.

Its subcellular location is the cell membrane. Key component of the proton channel; it plays a direct role in the translocation of protons across the membrane. In Streptococcus pneumoniae (strain ATCC BAA-255 / R6), this protein is ATP synthase subunit a.